The sequence spans 203 residues: Recombination protein RecR (203 aa).

Residues 56–71 form a C4-type zinc finger; it reads CAVCGNVSDEERCRIC. The 101-residue stretch at 79–179 folds into the Toprim domain; it reads SLICVVEEPK…TVTRIASGLP (101 aa).

Belongs to the RecR family.

Functionally, may play a role in DNA repair. It seems to be involved in an RecBC-independent recombinational process of DNA repair. It may act with RecF and RecO. This chain is Recombination protein RecR, found in Mycolicibacterium vanbaalenii (strain DSM 7251 / JCM 13017 / BCRC 16820 / KCTC 9966 / NRRL B-24157 / PYR-1) (Mycobacterium vanbaalenii).